Reading from the N-terminus, the 435-residue chain is Xylose isomerase (435 aa).

Active-site residues include His-100 and Asp-103. Positions 231, 267, 270, 295, 306, 308, and 338 each coordinate Mg(2+).

This sequence belongs to the xylose isomerase family. As to quaternary structure, homotetramer. Mg(2+) serves as cofactor.

The protein resides in the cytoplasm. The catalysed reaction is alpha-D-xylose = alpha-D-xylulofuranose. The polypeptide is Xylose isomerase (Brucella ovis (strain ATCC 25840 / 63/290 / NCTC 10512)).